The primary structure comprises 186 residues: Early nodulin-like protein 13 (186 aa).

Positions 1–23 (MAQRTLVATFFLIFFLLTNLVCS) are cleaved as a signal peptide. Residues 24-128 (KEIIVGGKTS…GEKLHIVVMS (105 aa)) enclose the Phytocyanin domain. A disulfide bridge links Cys-82 with Cys-116. N-linked (GlcNAc...) asparagine glycosylation is found at Asn-83 and Asn-90. Ala-165 carries the GPI-anchor amidated alanine lipid modification. A propeptide spans 166–186 (SSLTRQVGVLGFVGLLAIVLL) (removed in mature form).

This sequence belongs to the early nodulin-like (ENODL) family. As to expression, mostly expressed in seedlings, siliques and flowers, and, to a lower extent, in roots, stems and seeds, but barely in leaves.

The protein resides in the cell membrane. Its function is as follows. May act as a carbohydrate transporter. Required, together with ENODL11, ENODL12, ENODL13, ENODL14 and ENODL15, for male-female communication and pollen tube reception and burst at the synergid cell surface of the female gametophyte. The polypeptide is Early nodulin-like protein 13 (Arabidopsis thaliana (Mouse-ear cress)).